A 114-amino-acid polypeptide reads, in one-letter code: Ribonuclease U2 (114 aa).

3 disulfides stabilise this stretch: Cys1/Cys54, Cys9/Cys113, and Cys55/Cys96. Positions 29, 30, 31, 32, 37, and 39 each coordinate Ca(2+). Tyr39–Glu49 provides a ligand contact to substrate. Residue His41 is part of the active site. Glu62 serves as the catalytic Proton acceptor. Position 85 (Arg85) interacts with substrate. The active-site Proton donor is the His101. Asp108–Phe110 contributes to the substrate binding site.

Belongs to the ribonuclease U2 family.

The enzyme catalyses [RNA] containing adenosine + H2O = an [RNA fragment]-3'-adenosine-3'-phosphate + a 5'-hydroxy-ribonucleotide-3'-[RNA fragment].. The catalysed reaction is [RNA] containing guanosine + H2O = an [RNA fragment]-3'-guanosine-3'-phosphate + a 5'-hydroxy-ribonucleotide-3'-[RNA fragment].. This Ustilago sphaerogena (Smut fungus) protein is Ribonuclease U2 (RNU2).